The sequence spans 611 residues: Leucine aminopeptidase (611 aa).

Substrate contacts are provided by residues 129–131 (QCQ) and 278–282 (GGMEN). Residue His305 participates in Zn(2+) binding. Residue Glu306 is the Proton acceptor of the active site. The Zn(2+) site is built by His309 and Glu328. Catalysis depends on Tyr393, which acts as the Proton donor. 562-564 (RMK) contributes to the substrate binding site.

Belongs to the peptidase M1 family. Requires Zn(2+) as cofactor.

It is found in the cytoplasm. It catalyses the reaction an epoxide + H2O = an ethanediol. Aminopeptidase that preferentially cleaves di- and tripeptides. Also has low epoxide hydrolase activity (in vitro). Can hydrolyze the epoxide leukotriene LTA(4) but it forms preferentially 5,6-dihydroxy-7,9,11,14-eicosatetraenoic acid rather than the cytokine leukotriene B(4) as the product compared to the homologous mammalian enzyme (in vitro). In Oryza sativa subsp. japonica (Rice), this protein is Leucine aminopeptidase (LKHA4).